Reading from the N-terminus, the 200-residue chain is Protein GrpE (200 aa).

This sequence belongs to the GrpE family. Homodimer.

The protein localises to the cytoplasm. Functionally, participates actively in the response to hyperosmotic and heat shock by preventing the aggregation of stress-denatured proteins, in association with DnaK and GrpE. It is the nucleotide exchange factor for DnaK and may function as a thermosensor. Unfolded proteins bind initially to DnaJ; upon interaction with the DnaJ-bound protein, DnaK hydrolyzes its bound ATP, resulting in the formation of a stable complex. GrpE releases ADP from DnaK; ATP binding to DnaK triggers the release of the substrate protein, thus completing the reaction cycle. Several rounds of ATP-dependent interactions between DnaJ, DnaK and GrpE are required for fully efficient folding. The sequence is that of Protein GrpE from Shewanella piezotolerans (strain WP3 / JCM 13877).